The sequence spans 363 residues: MSLKHFIQDALSNWMKQKGPESDIVLSSRIRLARNFENIKFPARYTNEEASSIIQQFEDHFSGKELPDIGQFHLIRMSEAQPLEKRVLMEKHLISPNLTESPFGGCLLSENEEVSIMLNEEDHIRIQCLFPGFQLLNAIKAANQVDDWIEEKVDYAFGEKRGYLTSCPTNVGTGLRASVMMHLPGLVLTRQMNRIIPAINQLGLVVRGIYGEGSEALGNIFQISNQITLGKSEQDIVDDLNSVAAQLIEQERSAREALYQTSKIELEDRVFRSYGVLSNCRMIESKETAKCLSDVRLGIDLGIIKGLSSNILNELMILTQPGFLQQYSGGALRPNERDARRAALIRERLHLEMSANRQEDDSI.

Residues 24–254 (IVLSSRIRLA…AQLIEQERSA (231 aa)) enclose the Phosphagen kinase C-terminal domain. Residues 27–31 (SSRIR), His-92, Arg-125, 176–180 (RASVM), and 207–212 (RGIYGE) each bind ATP. Residues 337-342 (RDARRA) carry the RDXXRA motif of the pArg binding pocket involved in allosteric regulation motif.

Belongs to the ATP:guanido phosphotransferase family.

It catalyses the reaction L-arginyl-[protein] + ATP = N(omega)-phospho-L-arginyl-[protein] + ADP + H(+). Its activity is regulated as follows. Appears to be allosterically activated by the binding of pArg-containing polypeptides to the pArg-binding pocket localized in the C-terminal domain of McsB. Its function is as follows. Catalyzes the specific phosphorylation of arginine residues in a large number of proteins. Is part of the bacterial stress response system. Protein arginine phosphorylation has a physiologically important role and is involved in the regulation of many critical cellular processes, such as protein homeostasis, motility, competence, and stringent and stress responses, by regulating gene expression and protein activity. This chain is Protein-arginine kinase, found in Bacillus velezensis (strain DSM 23117 / BGSC 10A6 / LMG 26770 / FZB42) (Bacillus amyloliquefaciens subsp. plantarum).